The primary structure comprises 1733 residues: Serine-aspartate repeat-containing protein F (1733 aa).

The N-terminal stretch at Met-1–Ala-45 is a signal peptide. The interval Ala-46–Pro-678 is ligand binding A region. Disordered stretches follow at residues Lys-51 to Asp-269 and Pro-332 to Arg-351. Residues Ala-61 to Asn-74 are compositionally biased toward basic and acidic residues. 2 stretches are compositionally biased toward polar residues: residues Gly-85–Thr-99 and Pro-146–Asn-168. Residues Lys-175–Thr-184 are compositionally biased toward basic and acidic residues. Polar residues predominate over residues Gln-186–Gln-226. Residues Leu-227–Thr-253 are compositionally biased toward basic and acidic residues. Polar residues-rich tracts occupy residues Lys-255–Ser-266 and Asn-336–Lys-346. CNA-B domains are found at residues Thr-679–Pro-797, Lys-798–Pro-907, Thr-908–Pro-1018, and Lys-1019–Asp-1129. The segment at Thr-679–Asp-1129 is type I collagen binding region. The disordered stretch occupies residues Phe-862–Val-890. Positions Lys-1085–Thr-1708 are disordered. The span at Glu-1107–Phe-1119 shows a compositional bias: basic and acidic residues. Residues Tyr-1125–Ser-1684 show a composition bias toward acidic residues. Residues Asp-1685–Lys-1706 show a composition bias toward basic and acidic residues. Residues Leu-1694–Gly-1698 carry the LPXTG sorting signal motif. A Pentaglycyl murein peptidoglycan amidated threonine modification is found at Thr-1697. Residues Gly-1698–Lys-1733 constitute a propeptide, removed by sortase.

It belongs to the serine-aspartate repeat-containing protein (SDr) family.

Its subcellular location is the secreted. The protein resides in the cell wall. In terms of biological role, binds to type I collagen via alpha-2(I) or alpha-1(I) chains, although its affinity for the alpha-1(I) chain is significantly higher. Involved in bacterial adherence to transcutaneous drivelines from explanted ventricular assist devices. The chain is Serine-aspartate repeat-containing protein F (sdrF) from Staphylococcus epidermidis.